A 1338-amino-acid chain; its full sequence is Aldehyde oxidase (1338 aa).

The 88-residue stretch at serine 5–isoleucine 92 folds into the 2Fe-2S ferredoxin-type domain. Cysteine 44, cysteine 49, cysteine 52, and cysteine 74 together coordinate [2Fe-2S] cluster. Position 113 (glutamine 113) interacts with Mo-molybdopterin. [2Fe-2S] cluster-binding residues include cysteine 114, cysteine 117, cysteine 149, and cysteine 151. Cysteine 151 is a Mo-molybdopterin binding site. An FAD-binding PCMH-type domain is found at phenylalanine 236–lysine 421. FAD contacts are provided by residues valine 264–valine 271, alanine 345, serine 354, histidine 358, aspartate 367, and leucine 411. Mo-molybdopterin is bound by residues alanine 806–phenylalanine 807 and methionine 1047. Serine 1068 is modified (phosphoserine). Residues glycine 1088–valine 1091, glutamine 1203, and leucine 1268 contribute to the Mo-molybdopterin site. Residue glutamate 1270 is the Proton acceptor; for azaheterocycle hydroxylase activity of the active site.

Belongs to the xanthine dehydrogenase family. Homodimer. [2Fe-2S] cluster is required as a cofactor. The cofactor is FAD. Mo-molybdopterin serves as cofactor. In terms of tissue distribution, abundant in liver, expressed in adipose tissue and at lower levels in lung, skeletal muscle, pancreas. In contrast to mice, no significant gender difference in AOX1 expression level (at protein level).

It is found in the cytoplasm. The catalysed reaction is an aldehyde + O2 + H2O = a carboxylate + H2O2 + H(+). It catalyses the reaction retinal + O2 + H2O = retinoate + H2O2 + H(+). Its activity is regulated as follows. Is very potently inhibited by raloxifene. Also inhibited by estradiol, ethinyl estradiol, hydralazine, menadione, isovanillin and thioridazine. Not inhibited by allopurinol, a xanthine dehydrogenase potent inhibitor. Its function is as follows. Oxidase with broad substrate specificity, oxidizing aromatic azaheterocycles, such as N1-methylnicotinamide, N-methylphthalazinium and phthalazine, as well as aldehydes, such as benzaldehyde, retinal, pyridoxal, and vanillin. Plays a key role in the metabolism of xenobiotics and drugs containing aromatic azaheterocyclic substituents. Participates in the bioactivation of prodrugs such as famciclovir, catalyzing the oxidation step from 6-deoxypenciclovir to penciclovir, which is a potent antiviral agent. Is probably involved in the regulation of reactive oxygen species homeostasis. May be a prominent source of superoxide generation via the one-electron reduction of molecular oxygen. May also catalyze nitric oxide (NO) production via the reduction of nitrite to NO with NADH or aldehyde as electron donor. May play a role in adipogenesis. The polypeptide is Aldehyde oxidase (Homo sapiens (Human)).